Reading from the N-terminus, the 180-residue chain is Inner membrane-spanning protein YciB (180 aa).

6 helical membrane passes run 4-24 (LLSE…GGGI), 25-45 (QHAT…CYVI), 49-69 (VSKL…ITLI), 76-96 (IKIK…MSGI), 118-138 (ITLS…NEVV), and 150-170 (FKVF…LPLL).

This sequence belongs to the YciB family.

The protein resides in the cell inner membrane. In terms of biological role, plays a role in cell envelope biogenesis, maintenance of cell envelope integrity and membrane homeostasis. This chain is Inner membrane-spanning protein YciB, found in Rickettsia africae (strain ESF-5).